We begin with the raw amino-acid sequence, 171 residues long: 3-hydroxydecanoyl-[acyl-carrier-protein] dehydratase (171 aa).

His70 is a catalytic residue.

This sequence belongs to the thioester dehydratase family. FabA subfamily. Homodimer.

The protein localises to the cytoplasm. The enzyme catalyses a (3R)-hydroxyacyl-[ACP] = a (2E)-enoyl-[ACP] + H2O. It carries out the reaction (3R)-hydroxydecanoyl-[ACP] = (2E)-decenoyl-[ACP] + H2O. It catalyses the reaction (2E)-decenoyl-[ACP] = (3Z)-decenoyl-[ACP]. It participates in lipid metabolism; fatty acid biosynthesis. In terms of biological role, necessary for the introduction of cis unsaturation into fatty acids. Catalyzes the dehydration of (3R)-3-hydroxydecanoyl-ACP to E-(2)-decenoyl-ACP and then its isomerization to Z-(3)-decenoyl-ACP. Can catalyze the dehydratase reaction for beta-hydroxyacyl-ACPs with saturated chain lengths up to 16:0, being most active on intermediate chain length. The polypeptide is 3-hydroxydecanoyl-[acyl-carrier-protein] dehydratase (Pseudomonas fluorescens (strain ATCC BAA-477 / NRRL B-23932 / Pf-5)).